Reading from the N-terminus, the 158-residue chain is NAD(P)H-quinone oxidoreductase subunit J, chloroplastic (158 aa).

Belongs to the complex I 30 kDa subunit family. NDH is composed of at least 16 different subunits, 5 of which are encoded in the nucleus.

Its subcellular location is the plastid. The protein localises to the chloroplast thylakoid membrane. The enzyme catalyses a plastoquinone + NADH + (n+1) H(+)(in) = a plastoquinol + NAD(+) + n H(+)(out). The catalysed reaction is a plastoquinone + NADPH + (n+1) H(+)(in) = a plastoquinol + NADP(+) + n H(+)(out). Functionally, NDH shuttles electrons from NAD(P)H:plastoquinone, via FMN and iron-sulfur (Fe-S) centers, to quinones in the photosynthetic chain and possibly in a chloroplast respiratory chain. The immediate electron acceptor for the enzyme in this species is believed to be plastoquinone. Couples the redox reaction to proton translocation, and thus conserves the redox energy in a proton gradient. The chain is NAD(P)H-quinone oxidoreductase subunit J, chloroplastic from Nymphaea alba (White water-lily).